The following is a 353-amino-acid chain: UPF0283 membrane protein YPA_1696 (353 aa).

The next 3 membrane-spanning stretches (helical) occupy residues 71 to 91 (MVTA…VQWV), 101 to 121 (IALG…GSVV), and 214 to 234 (ESAL…FIAW).

This sequence belongs to the UPF0283 family.

The protein localises to the cell inner membrane. The polypeptide is UPF0283 membrane protein YPA_1696 (Yersinia pestis bv. Antiqua (strain Antiqua)).